The chain runs to 330 residues: Mas-related G-protein coupled receptor member X2 (330 aa).

The Extracellular portion of the chain corresponds to 1 to 33 (MDPTTLVWGTESTTMNGNDQALPLLCGKETLIL). The chain crosses the membrane as a helical span at residues 34–54 (VVLILFIALVGLVGNAFVLWL). Topologically, residues 55-63 (LGFRMRRNA) are cytoplasmic. The helical transmembrane segment at 64–84 (FSVYVLSLAGADFLFLCFPMI) threads the bilayer. The Extracellular segment spans residues 85 to 96 (NCLAYLINFFHS). Residues 97 to 117 (ISINFPSFFTTVMTCAYLAGL) form a helical membrane-spanning segment. Residues 118–144 (SMLSAISTERCLSVLWPIWYRSRRPRH) are Cytoplasmic-facing. Residues 145–165 (LSAVMCVLLWALSLLLSILEG) traverse the membrane as a helical segment. Residues 166–184 (KFCGFLFSDGDSGWCQTFD) are Extracellular-facing. The helical transmembrane segment at 185–205 (FITAAWLMFLFVVLCGSSLAL) threads the bilayer. Residues 206 to 228 (LVRILCGSRGLPLTRLYLTILLT) are Cytoplasmic-facing. The chain crosses the membrane as a helical span at residues 229–249 (VLIFLLCGLPFGIQWFLILWI). The Extracellular portion of the chain corresponds to 250–264 (WKNSDVLFCHIHPVS). Residues 265–285 (VVLSSFNSSANPIIYFFVGSF) form a helical membrane-spanning segment. Topologically, residues 286-330 (RKQWRLRQPVLKLALQRALQDTAEVDHSEGCFSQGTLEMSGSSLV) are cytoplasmic.

The protein belongs to the G-protein coupled receptor 1 family. Mas subfamily.

The protein resides in the cell membrane. Mast cell-specific receptor for basic secretagogues, i.e. cationic amphiphilic drugs, as well as endo- or exogenous peptides, consisting of a basic head group and a hydrophobic core. Recognizes and binds small molecules containing a cyclized tetrahydroisoquinoline (THIQ), such as non-steroidal neuromuscular blocking drugs (NMBDs), including tubocurarine and atracurium. In response to these compounds, mediates pseudo-allergic reactions characterized by histamine release, inflammation and airway contraction. The polypeptide is Mas-related G-protein coupled receptor member X2 (MRGPRX2) (Trachypithecus francoisi (Francois' leaf monkey)).